Here is a 295-residue protein sequence, read N- to C-terminus: Acetyl-coenzyme A carboxylase carboxyl transferase subunit beta (295 aa).

Positions 1–20 (MSWLSKLMPSGIRTENTPAK) are disordered. The region spanning 28-295 (LWEKCSNCGS…QPHPQDADAA (268 aa)) is the CoA carboxyltransferase N-terminal domain. Cys-32, Cys-35, Cys-51, and Cys-54 together coordinate Zn(2+). The C4-type zinc finger occupies 32-54 (CSNCGSALYGPELEENLEVCPKC).

This sequence belongs to the AccD/PCCB family. In terms of assembly, acetyl-CoA carboxylase is a heterohexamer composed of biotin carboxyl carrier protein (AccB), biotin carboxylase (AccC) and two subunits each of ACCase subunit alpha (AccA) and ACCase subunit beta (AccD). Zn(2+) is required as a cofactor.

It is found in the cytoplasm. It catalyses the reaction N(6)-carboxybiotinyl-L-lysyl-[protein] + acetyl-CoA = N(6)-biotinyl-L-lysyl-[protein] + malonyl-CoA. The protein operates within lipid metabolism; malonyl-CoA biosynthesis; malonyl-CoA from acetyl-CoA: step 1/1. Its function is as follows. Component of the acetyl coenzyme A carboxylase (ACC) complex. Biotin carboxylase (BC) catalyzes the carboxylation of biotin on its carrier protein (BCCP) and then the CO(2) group is transferred by the transcarboxylase to acetyl-CoA to form malonyl-CoA. The polypeptide is Acetyl-coenzyme A carboxylase carboxyl transferase subunit beta (Xanthomonas axonopodis pv. citri (strain 306)).